Consider the following 339-residue polypeptide: uncharacterized protein (339 aa).

ATP is bound at residue 28–35; that stretch reads GPINSGKT.

This sequence belongs to the archaeal ATPase family.

This is an uncharacterized protein from Pyrococcus abyssi (strain GE5 / Orsay).